The sequence spans 143 residues: Alpha-S2-casein-like B (143 aa).

An N-terminal signal peptide occupies residues M1–A15.

It belongs to the alpha-casein family. In terms of tissue distribution, mammary gland specific. Secreted in milk.

It localises to the secreted. Its function is as follows. Important role in the capacity of milk to transport calcium phosphate. The sequence is that of Alpha-S2-casein-like B (Csn1s2b) from Mus musculus (Mouse).